Here is a 39-residue protein sequence, read N- to C-terminus: ORF8a protein (39 aa).

A signal peptide spans 1 to 15 (MKLLIVLTCISLCSC). Positions 16-39 (ICTVVQRCASNKPHVLEDPCKVQH) constitute an SARS ORF8 Ig-like domain.

The sequence is that of ORF8a protein from Homo sapiens (Human).